The chain runs to 1378 residues: Disease resistance protein RRS1 (1378 aa).

The 142-residue stretch at Glu-5–His-146 folds into the TIR domain. Positions Ile-170–His-421 constitute an NB-ARC domain. ATP is bound at residue Gly-179–Thr-186. LRR repeat units follow at residues Ser-498 to Asn-522, Asn-535 to Pro-553, Asn-554 to Pro-575, His-577 to Leu-598, Ala-621 to Arg-646, Pro-665 to Pro-688, Leu-742 to Gly-766, Pro-768 to Ile-793, and Pro-831 to Leu-854. The Nuclear localization signal signature appears at Arg-988–Asp-1005. A DNA-binding region (WRKY) is located at residues Ile-1204–Pro-1272. The tract at residues Arg-1300–Arg-1321 is disordered.

As to quaternary structure, interacts with PopP2, a R.solanacearum type III effector.

Its subcellular location is the nucleus. The protein localises to the cytoplasm. Its function is as follows. Transcription factor. Interacts specifically with the W box (5'-(T)TGAC[CT]-3'), a frequently occurring elicitor-responsive cis-acting element. Also acts as a disease resistance protein involved in resistance to fungal and bacterial pathogens, including R.solanacearum, P.syringae pv. tomato and C.higginsianum. RRS1 mediated resistance depends on salicylic acid and NDR1 (AC O48915). This is Disease resistance protein RRS1 from Arabidopsis thaliana (Mouse-ear cress).